Here is a 657-residue protein sequence, read N- to C-terminus: Leishmanolysin (657 aa).

The first 41 residues, 1 to 41 (MSVDSSSSSTHRRRCVAARLVRLAAAGAAVTVAVGTAAAWA), serve as a signal peptide directing secretion. A propeptide spans 42–102 (HAGALQHRCI…DPRPGSAPTV (61 aa)) (activation peptide). Residues 44–611 (GALQHRCIHD…DRMVGLATAA (568 aa)) lie on the Extracellular side of the membrane. The N-linked (GlcNAc...) asparagine glycan is linked to Asn107. Cystine bridges form between Cys127/Cys144 and Cys193/Cys232. His266 serves as a coordination point for Zn(2+). Glu267 is an active-site residue. His270 contributes to the Zn(2+) binding site. Asn302 carries N-linked (GlcNAc...) asparagine glycosylation. 7 disulfides stabilise this stretch: Cys316-Cys388, Cys395-Cys458, Cys408-Cys427, Cys417-Cys492, Cys469-Cys513, Cys518-Cys568, and Cys538-Cys561. Position 336 (His336) interacts with Zn(2+). 5 N-linked (GlcNAc...) asparagine glycosylation sites follow: Asn399, Asn409, Asn445, Asn466, and Asn501. The chain crosses the membrane as a helical span at residues 612–632 (TVLLGMVLSLMALVVVWLLLV). Over 633–657 (SCPWWCCKLGGPPASVTPACSPETE) the chain is Cytoplasmic.

This sequence belongs to the peptidase M8 family. Requires Zn(2+) as cofactor.

Its subcellular location is the membrane. The catalysed reaction is Preference for hydrophobic residues at P1 and P1' and basic residues at P2' and P3'. A model nonapeptide is cleaved at -Ala-Tyr-|-Leu-Lys-Lys-.. Has an integral role during the infection of macrophages in the mammalian host. In Leishmania tropica, this protein is Leishmanolysin (mspC).